The following is a 286-amino-acid chain: tRNA (guanine-N(7)-)-methyltransferase (286 aa).

The tract at residues 1–21 (MTNPESTAIDPVAAMGTDHTE) is disordered. S-adenosyl-L-methionine contacts are provided by Glu91, Glu116, Asn143, and Asp165. Residue Asp165 is part of the active site. Substrate-binding positions include Lys169, Asp201, and 262–265 (TNFE).

The protein belongs to the class I-like SAM-binding methyltransferase superfamily. TrmB family.

It catalyses the reaction guanosine(46) in tRNA + S-adenosyl-L-methionine = N(7)-methylguanosine(46) in tRNA + S-adenosyl-L-homocysteine. The protein operates within tRNA modification; N(7)-methylguanine-tRNA biosynthesis. Catalyzes the formation of N(7)-methylguanine at position 46 (m7G46) in tRNA. This Bifidobacterium longum (strain NCC 2705) protein is tRNA (guanine-N(7)-)-methyltransferase.